The primary structure comprises 1332 residues: DNA-directed RNA polymerase subunit beta'' (1332 aa).

Zn(2+)-binding residues include C220, C291, C298, and C301.

This sequence belongs to the RNA polymerase beta' chain family. RpoC2 subfamily. As to quaternary structure, in plastids the minimal PEP RNA polymerase catalytic core is composed of four subunits: alpha, beta, beta', and beta''. When a (nuclear-encoded) sigma factor is associated with the core the holoenzyme is formed, which can initiate transcription. Requires Zn(2+) as cofactor.

Its subcellular location is the plastid. The protein localises to the chloroplast. The catalysed reaction is RNA(n) + a ribonucleoside 5'-triphosphate = RNA(n+1) + diphosphate. Its function is as follows. DNA-dependent RNA polymerase catalyzes the transcription of DNA into RNA using the four ribonucleoside triphosphates as substrates. This chain is DNA-directed RNA polymerase subunit beta'', found in Lotus japonicus (Lotus corniculatus var. japonicus).